Consider the following 357-residue polypeptide: Uroporphyrinogen decarboxylase (357 aa).

Residues Arg30–Arg34, Asp79, Tyr154, Ser209, and His336 contribute to the substrate site.

The protein belongs to the uroporphyrinogen decarboxylase family. Homodimer.

It is found in the cytoplasm. It carries out the reaction uroporphyrinogen III + 4 H(+) = coproporphyrinogen III + 4 CO2. It functions in the pathway porphyrin-containing compound metabolism; protoporphyrin-IX biosynthesis; coproporphyrinogen-III from 5-aminolevulinate: step 4/4. Functionally, catalyzes the decarboxylation of four acetate groups of uroporphyrinogen-III to yield coproporphyrinogen-III. In Mycobacterium bovis (strain ATCC BAA-935 / AF2122/97), this protein is Uroporphyrinogen decarboxylase.